We begin with the raw amino-acid sequence, 97 residues long: Small ribosomal subunit protein bS6 (97 aa).

It belongs to the bacterial ribosomal protein bS6 family.

In terms of biological role, binds together with bS18 to 16S ribosomal RNA. The chain is Small ribosomal subunit protein bS6 from Dictyoglomus turgidum (strain DSM 6724 / Z-1310).